The sequence spans 168 residues: Group IIF secretory phospholipase A2 (168 aa).

Positions 1-20 are cleaved as a signal peptide; sequence MKKFFAIAVLAGSVVTTAHS. Intrachain disulfides connect Cys46–Cys138, Cys48–Cys64, Cys63–Cys120, Cys69–Cys145, Cys70–Cys113, Cys79–Cys106, and Cys98–Cys111. Residues Tyr47, Gly49, and Gly51 each coordinate Ca(2+). His67 is a catalytic residue. Ca(2+) is bound at residue Asp68. N-linked (GlcNAc...) asparagine glycosylation is found at Asn92 and Asn102. Residue Asp114 is part of the active site. The interval 139–168 is required for localization on the plasma membrane; the sequence is QGPTPNCSIYDPYPEEVTCGHGLPATPVST. Asn144 is a glycosylation site (N-linked (GlcNAc...) asparagine).

This sequence belongs to the phospholipase A2 family. Ca(2+) serves as cofactor. Strongly expressed in testis.

The protein localises to the secreted. The protein resides in the cell membrane. It carries out the reaction a 1,2-diacyl-sn-glycero-3-phosphocholine + H2O = a 1-acyl-sn-glycero-3-phosphocholine + a fatty acid + H(+). The catalysed reaction is 1-hexadecanoyl-2-(9Z-octadecenoyl)-sn-glycero-3-phospho-(1'-sn-glycerol) + H2O = 1-hexadecanoyl-sn-glycero-3-phospho-(1'-sn-glycerol) + (9Z)-octadecenoate + H(+). The enzyme catalyses 1-hexadecanoyl-2-(9Z,12Z-octadecadienoyl)-sn-glycero-3-phosphoethanolamine + H2O = 1-hexadecanoyl-sn-glycero-3-phosphoethanolamine + (9Z,12Z)-octadecadienoate + H(+). It catalyses the reaction 1-hexadecanoyl-2-(5Z,8Z,11Z,14Z-eicosatetraenoyl)-sn-glycero-3-phosphoethanolamine + H2O = 1-hexadecanoyl-sn-glycero-3-phosphoethanolamine + (5Z,8Z,11Z,14Z)-eicosatetraenoate + H(+). It carries out the reaction 1-hexadecanoyl-2-(9Z-octadecenoyl)-sn-glycero-3-phosphocholine + H2O = 1-hexadecanoyl-sn-glycero-3-phosphocholine + (9Z)-octadecenoate + H(+). The catalysed reaction is 1-hexadecanoyl-2-(9Z-octadecenoyl)-sn-glycero-3-phospho-L-serine + H2O = 1-hexadecanoyl-sn-glycero-3-phospho-L-serine + (9Z)-octadecenoate + H(+). Secretory calcium-dependent phospholipase A2 that primarily targets extracellular phospholipids. Hydrolyzes the ester bond of the fatty acyl group attached at the sn-2 position of phospholipids (phospholipase A2 activity), the catalytic efficiency decreasing in the following order: phosphatidylglycerols &gt; phosphatidylethanolamines &gt; phosphatidylcholines &gt; phosphatidylserines. May play a role in lipid mediator production in inflammatory conditions, by providing arachidonic acid to downstream cyclooxygenases and lipoxygenases. This is Group IIF secretory phospholipase A2 (Pla2g2f) from Mus musculus (Mouse).